Here is a 243-residue protein sequence, read N- to C-terminus: Hydroxyacylglutathione hydrolase (243 aa).

The Zn(2+) site is built by H59, H61, D63, H64, H117, D135, and H173.

The protein belongs to the metallo-beta-lactamase superfamily. Glyoxalase II family. In terms of assembly, monomer. Zn(2+) serves as cofactor.

The enzyme catalyses an S-(2-hydroxyacyl)glutathione + H2O = a 2-hydroxy carboxylate + glutathione + H(+). The protein operates within secondary metabolite metabolism; methylglyoxal degradation; (R)-lactate from methylglyoxal: step 2/2. Thiolesterase that catalyzes the hydrolysis of S-D-lactoyl-glutathione to form glutathione and D-lactic acid. This chain is Hydroxyacylglutathione hydrolase, found in Acidiphilium cryptum (strain JF-5).